The primary structure comprises 877 residues: Putative leucine-rich repeat receptor-like serine/threonine-protein kinase At2g19230 (877 aa).

The signal sequence occupies residues 1–24 (MGNFNFLPLVSFASFVVVLVLVCA). The Extracellular segment spans residues 25-517 (QDQSGFVSID…RNKKTERKEY (493 aa)). 6 N-linked (GlcNAc...) asparagine glycosylation sites follow: asparagine 142, asparagine 233, asparagine 261, asparagine 295, asparagine 405, and asparagine 420. LRR repeat units lie at residues 439–462 (PLQKLDLSNNRLTGTVPDFLANLP) and 463–484 (DLTELNLEENKLTGILPEKLLE). The chain crosses the membrane as a helical span at residues 518 to 538 (IIPSVASVTGLFFLLLALISF). Residues 539–877 (WQFKKRQQSV…VDPGVLPQPR (339 aa)) are Cytoplasmic-facing. The region spanning 569-842 (NNFERVLGQG…QVVAELKESL (274 aa)) is the Protein kinase domain. ATP contacts are provided by residues 575-583 (LGQGGFGKV) and lysine 596. Tyrosine 641 is subject to Phosphotyrosine. Residue aspartate 692 is the Proton acceptor of the active site. Residue serine 726 is modified to Phosphoserine. Residues threonine 727 and threonine 732 each carry the phosphothreonine modification.

The protein belongs to the protein kinase superfamily. Ser/Thr protein kinase family.

The protein localises to the cell membrane. The catalysed reaction is L-seryl-[protein] + ATP = O-phospho-L-seryl-[protein] + ADP + H(+). It carries out the reaction L-threonyl-[protein] + ATP = O-phospho-L-threonyl-[protein] + ADP + H(+). This is Putative leucine-rich repeat receptor-like serine/threonine-protein kinase At2g19230 from Arabidopsis thaliana (Mouse-ear cress).